The chain runs to 253 residues: MTPVNQPTRQIVLDTETTGMNQFGAHYEGHCIIEIGAVEMINRRLTGNNFHIYIKPNRPVDPDAIKVHGITDEMLADKPMFNEVAQQFIDYIQGAELLIHNAPFDVGFMDYEFKKLNLNINTDAICMVTDTLQMARQMYPGKRNSLDALCDRLGIDNSKRTLHGALLDAEILADVYLTMTGGQTSLFDENEPEIAVVAVQEQIQSAVAFSQDLKRLQPNADELQAHLDYLLLLNKKSKGNCLWEKRLAELKTH.

A divalent metal cation contacts are provided by aspartate 14 and glutamate 16. The substrate site is built by aspartate 14, glutamate 16, aspartate 63, and histidine 68. The active-site Proton acceptor is histidine 163. Residue aspartate 168 coordinates a divalent metal cation. A substrate-binding site is contributed by aspartate 168.

DNA polymerase III contains a core (composed of alpha, epsilon and theta chains) that associates with a tau subunit. This core dimerizes to form the POLIII' complex. PolIII' associates with the gamma complex (composed of gamma, delta, delta', psi and chi chains) and with the beta chain to form the complete DNA polymerase III complex. Requires Mg(2+) as cofactor. It depends on Mn(2+) as a cofactor.

The catalysed reaction is DNA(n) + a 2'-deoxyribonucleoside 5'-triphosphate = DNA(n+1) + diphosphate. DNA polymerase III is a complex, multichain enzyme responsible for most of the replicative synthesis in bacteria. The epsilon subunit contain the editing function and is a proofreading 3'-5' exonuclease. The chain is DNA polymerase III subunit epsilon (dnaQ) from Pasteurella multocida (strain Pm70).